A 147-amino-acid polypeptide reads, in one-letter code: Small ribosomal subunit protein uS12 (147 aa).

Belongs to the universal ribosomal protein uS12 family. Part of the 30S ribosomal subunit.

In terms of biological role, with S4 and S5 plays an important role in translational accuracy. Located at the interface of the 30S and 50S subunits. This Ignicoccus hospitalis (strain KIN4/I / DSM 18386 / JCM 14125) protein is Small ribosomal subunit protein uS12.